The primary structure comprises 325 residues: Tetraacyldisaccharide 4'-kinase (325 aa).

An ATP-binding site is contributed by 53-60; that stretch reads SVGGNGKT.

This sequence belongs to the LpxK family.

The catalysed reaction is a lipid A disaccharide + ATP = a lipid IVA + ADP + H(+). It functions in the pathway glycolipid biosynthesis; lipid IV(A) biosynthesis; lipid IV(A) from (3R)-3-hydroxytetradecanoyl-[acyl-carrier-protein] and UDP-N-acetyl-alpha-D-glucosamine: step 6/6. Functionally, transfers the gamma-phosphate of ATP to the 4'-position of a tetraacyldisaccharide 1-phosphate intermediate (termed DS-1-P) to form tetraacyldisaccharide 1,4'-bis-phosphate (lipid IVA). The protein is Tetraacyldisaccharide 4'-kinase of Pasteurella multocida (strain Pm70).